The chain runs to 199 residues: dITP/XTP pyrophosphatase (199 aa).

8 to 13 (SGNAGK) serves as a coordination point for substrate. The Proton acceptor role is filled by D69. D69 provides a ligand contact to Mg(2+). Residues S70, 154 to 157 (FGYN), K177, and 182 to 183 (HR) each bind substrate.

Belongs to the HAM1 NTPase family. Homodimer. Requires Mg(2+) as cofactor.

The catalysed reaction is XTP + H2O = XMP + diphosphate + H(+). It catalyses the reaction dITP + H2O = dIMP + diphosphate + H(+). The enzyme catalyses ITP + H2O = IMP + diphosphate + H(+). In terms of biological role, pyrophosphatase that catalyzes the hydrolysis of nucleoside triphosphates to their monophosphate derivatives, with a high preference for the non-canonical purine nucleotides XTP (xanthosine triphosphate), dITP (deoxyinosine triphosphate) and ITP. Seems to function as a house-cleaning enzyme that removes non-canonical purine nucleotides from the nucleotide pool, thus preventing their incorporation into DNA/RNA and avoiding chromosomal lesions. This Xanthomonas axonopodis pv. citri (strain 306) protein is dITP/XTP pyrophosphatase.